Consider the following 745-residue polypeptide: Receptor-type adenylate cyclase (745 aa).

The Extracellular segment spans residues G1 to L341. 4 N-linked (GlcNAc...) asparagine glycosylation sites follow: N15, N50, N189, and N312. A helical transmembrane segment spans residues I342–L362. Residues C363 to V745 lie on the Cytoplasmic side of the membrane. Residues T384–E538 enclose the Guanylate cyclase domain. Mg(2+)-binding residues include D389 and D432.

It belongs to the adenylyl cyclase class-3 family. Mg(2+) serves as cofactor.

It is found in the cell membrane. It catalyses the reaction ATP = 3',5'-cyclic AMP + diphosphate. Its function is as follows. Could act as a receptor for an unknown ligand. The sequence is that of Receptor-type adenylate cyclase from Trypanosoma congolense.